Here is a 404-residue protein sequence, read N- to C-terminus: Floricaula/leafy-like protein FL1 (404 aa).

The tract at residues 210 to 251 (IGVPEHSSESDERKADTNKQKRRRSKEPGEDGEDRPREHPFI) is disordered. Basic and acidic residues-rich tracts occupy residues 215 to 228 (HSSE…DTNK) and 235 to 249 (KEPG…REHP). DNA-binding regions lie at residues 246 to 250 (REHPF), 315 to 322 (NKPKMRHY), and 386 to 389 (YVPT).

Belongs to the FLO/LFY family. In terms of tissue distribution, expressed in both male and female cones, vegetative buds and needles, but not in the roots.

It is found in the nucleus. Its function is as follows. Probable transcription factor. The chain is Floricaula/leafy-like protein FL1 from Pinus radiata (Monterey pine).